Reading from the N-terminus, the 435-residue chain is Serine--tRNA ligase (435 aa).

242 to 244 (TAE) contributes to the L-serine binding site. 273 to 275 (RSE) provides a ligand contact to ATP. Glu296 is a binding site for L-serine. 360-363 (EISS) is a binding site for ATP. Ser396 provides a ligand contact to L-serine.

The protein belongs to the class-II aminoacyl-tRNA synthetase family. Type-1 seryl-tRNA synthetase subfamily. As to quaternary structure, homodimer. The tRNA molecule binds across the dimer.

It is found in the cytoplasm. It catalyses the reaction tRNA(Ser) + L-serine + ATP = L-seryl-tRNA(Ser) + AMP + diphosphate + H(+). It carries out the reaction tRNA(Sec) + L-serine + ATP = L-seryl-tRNA(Sec) + AMP + diphosphate + H(+). Its pathway is aminoacyl-tRNA biosynthesis; selenocysteinyl-tRNA(Sec) biosynthesis; L-seryl-tRNA(Sec) from L-serine and tRNA(Sec): step 1/1. In terms of biological role, catalyzes the attachment of serine to tRNA(Ser). Is also able to aminoacylate tRNA(Sec) with serine, to form the misacylated tRNA L-seryl-tRNA(Sec), which will be further converted into selenocysteinyl-tRNA(Sec). In Vibrio cholerae serotype O1 (strain ATCC 39541 / Classical Ogawa 395 / O395), this protein is Serine--tRNA ligase.